An 85-amino-acid chain; its full sequence is Cell division topological specificity factor (85 aa).

It belongs to the MinE family.

In terms of biological role, prevents the cell division inhibition by proteins MinC and MinD at internal division sites while permitting inhibition at polar sites. This ensures cell division at the proper site by restricting the formation of a division septum at the midpoint of the long axis of the cell. The protein is Cell division topological specificity factor of Xanthomonas euvesicatoria pv. vesicatoria (strain 85-10) (Xanthomonas campestris pv. vesicatoria).